A 1400-amino-acid polypeptide reads, in one-letter code: MKDLINFLKRQTQSEEFDAIRISLASPDMIRSWSYGEVKKPETINYRTFKPERDGLFCAKIFGPVSDYECLCGKYKRLKHRGVICEKCGVEVTLSKVRRERMGHIELASPVAHIWFLKSLPSRIALLLDMQLREIERVLYFESYVVIDPGMTPLTRGQLLGEEEYQKLVEQYDDEFTAKMGAEAIRELLRTMDLHAEVVQLREEINGTNSETKIKKYTKRLKAIESMLASNNRPEWMILTVLPVLPPDLRPLVPLDGGRFATSDLNDLYRRVINRNNRLKRLLDLNAPDIIVRNEKRMLQESVDALLDNGRRGRAITGSNKRPLKSLADMIKGKQGRFRQNLLGKRVDYSGRSVIVVGPTLRLHQCGLPKKMALELFKPFIFSKLQFRGLATTIKAAKKMVEREAPEVWDILDEVIREHPVMLNRAPTLHRLGIQAFEPILIEGKAIQLHPLVCTAFNADFDGDQMAVHVPLSLEAQLEARSLMMATNNILSPANGEPIINPTQDVVMGLYYMSRERLFAKGEGMTFASVDEAEQAFLNGAVDLHAKVVVRVREVVVGEGGERTESIKRVQTTVGRALIWNIVPEGIPFEMVNVDMTKKAISRLINHAYRTLGIKASVIFADQLMYLGFSHATRAGVSFGVEDMEIPVRKDEIIQAAEREVKEIQNQFASGLVTDGERYNKVVDIWSHANDQVAKVMMEGLGVDEVTVGNGETIKQKSFNSIFMMADSGARGSAAQIRQLAGMRGLMAKPDGSIIETPITANFREGLTVLQYFISTHGARKGLADTALKTANSGYLTRRLVDVAQDLVITEDDCGTTDGLQMAPLIEGGDVVEPLAERVLGRVLAEHAVDPASGDVLLEAGSMLDERAVQLLEQHGVDNVRVRSVITCKTRYGVCASCYGRDLGRGHKVNIGEAIGVIAAQSIGEPGTQLTMRTFHIGGAASRSAAISNVEVKSSGQIRLTNLKTVVNRDNALVAVSRSGEISVIDEHGRERERYKIPYGAVLSVREGGAVKAGQIVVNWDPHTHPVISEVRGRAKLIDFVEGVTVREQSDEMTGLSSMVVIDPKQRGGAGKELRPLVKLVDEEGNDIFIPSTEITAQYFLPAGAIIGIRDGDLVEVGDVLARIPQESSKTRDITGGLPRVADLFEARKTKDPAILAEATGTVSFGKETKGKRRLIITDASGEQHEVMVPKWRNITVFEGEHVEQGETIAEGELTPHDILRLRGTAELASYLVKEIQDVYRLQGVKINDKHIEVIIRQMLRKVEITDPGDSSFLRGEQVDRSRLLEENDRLEEEGKVPACYEPVLLGITKASLSTESFISAASFQETTRVLTEAAIRGSTDRLQGLKENVIVGRLIPAGTGLAYHTERRERAKLGEVTEPETPIIDTAEVEEALKQAFSL.

Zn(2+) is bound by residues Cys70, Cys72, Cys85, and Cys88. 3 residues coordinate Mg(2+): Asp460, Asp462, and Asp464. Residues Cys814, Cys888, Cys895, and Cys898 each contribute to the Zn(2+) site.

This sequence belongs to the RNA polymerase beta' chain family. In terms of assembly, the RNAP catalytic core consists of 2 alpha, 1 beta, 1 beta' and 1 omega subunit. When a sigma factor is associated with the core the holoenzyme is formed, which can initiate transcription. It depends on Mg(2+) as a cofactor. Requires Zn(2+) as cofactor.

It catalyses the reaction RNA(n) + a ribonucleoside 5'-triphosphate = RNA(n+1) + diphosphate. DNA-dependent RNA polymerase catalyzes the transcription of DNA into RNA using the four ribonucleoside triphosphates as substrates. The polypeptide is DNA-directed RNA polymerase subunit beta' (Methylococcus capsulatus (strain ATCC 33009 / NCIMB 11132 / Bath)).